We begin with the raw amino-acid sequence, 237 residues long: Sugar fermentation stimulation protein homolog (237 aa).

Belongs to the SfsA family.

The chain is Sugar fermentation stimulation protein homolog from Pseudomonas savastanoi pv. phaseolicola (strain 1448A / Race 6) (Pseudomonas syringae pv. phaseolicola (strain 1448A / Race 6)).